Reading from the N-terminus, the 217-residue chain is Octanoyltransferase (217 aa).

One can recognise a BPL/LPL catalytic domain in the interval 32–207 (SESHDELWIV…TFSQLLGYQH (176 aa)). Substrate is bound by residues 71-78 (RGGQVTYH), 138-140 (SLG), and 151-153 (GLA). The active-site Acyl-thioester intermediate is the Cys169.

It belongs to the LipB family.

The protein resides in the cytoplasm. The enzyme catalyses octanoyl-[ACP] + L-lysyl-[protein] = N(6)-octanoyl-L-lysyl-[protein] + holo-[ACP] + H(+). It participates in protein modification; protein lipoylation via endogenous pathway; protein N(6)-(lipoyl)lysine from octanoyl-[acyl-carrier-protein]: step 1/2. Its function is as follows. Catalyzes the transfer of endogenously produced octanoic acid from octanoyl-acyl-carrier-protein onto the lipoyl domains of lipoate-dependent enzymes. Lipoyl-ACP can also act as a substrate although octanoyl-ACP is likely to be the physiological substrate. This is Octanoyltransferase from Shewanella baltica (strain OS155 / ATCC BAA-1091).